The following is a 331-amino-acid chain: Putative peptidyl-prolyl cis-trans isomerase RF_0616 (331 aa).

A disordered region spans residues 28–50; that stretch reads NPTTIEQTASNNSSTDENQTSIN. Residues 128-226 enclose the PPIase FKBP-type domain; it reads GHVVTVFYQI…NNEVKIYDDE (99 aa).

It catalyses the reaction [protein]-peptidylproline (omega=180) = [protein]-peptidylproline (omega=0). In Rickettsia felis (strain ATCC VR-1525 / URRWXCal2) (Rickettsia azadi), this protein is Putative peptidyl-prolyl cis-trans isomerase RF_0616.